The following is a 499-amino-acid chain: MTIIDTRTPDAKRLIPGATGDWEIIIGLEVHAQVISEAKLFSGASTAFGAAPNANVSLVDAAMPGMLPVINEECVKQAIRTGLGLKAQINHKSVFDRKNYFYPDLPQGYQISQFKQPIVGEGTVIVSVGPDRQGEFEDIEVGIERLHLEQDAGKSMHDQHPTMSYVDLNRSGVALMEIVSKPDLRSGDEAKAYVTKLRTIMRYLGTCDGNMDEGSLRADVNVSVRRPGGEFGTRCEIKNMNSIRFIGQAIDYEARRQIAILEDGGKIDQETRLYDAVKGETRSMRSKEEAHDYRYFPDPDLLPLEFDQAYVDALAKELPELPDDKKARLITSLGLSTYDASILVSEKSVADYFEKVAAGRDGKLAANWVINDLLGQLNKVGKDIENAPVSPDQLGAIIDLIKDGTISGKIAKDLFEIVWSEGGDPRALVESRGMKQVTDTGAIEKAVDEVIAANPDKVEQARAKPTMAGWFVGQVMKATGGKANPQAVNDLVKAKLGIE.

This sequence belongs to the GatB/GatE family. GatB subfamily. In terms of assembly, heterotrimer of A, B and C subunits.

It carries out the reaction L-glutamyl-tRNA(Gln) + L-glutamine + ATP + H2O = L-glutaminyl-tRNA(Gln) + L-glutamate + ADP + phosphate + H(+). The catalysed reaction is L-aspartyl-tRNA(Asn) + L-glutamine + ATP + H2O = L-asparaginyl-tRNA(Asn) + L-glutamate + ADP + phosphate + 2 H(+). Allows the formation of correctly charged Asn-tRNA(Asn) or Gln-tRNA(Gln) through the transamidation of misacylated Asp-tRNA(Asn) or Glu-tRNA(Gln) in organisms which lack either or both of asparaginyl-tRNA or glutaminyl-tRNA synthetases. The reaction takes place in the presence of glutamine and ATP through an activated phospho-Asp-tRNA(Asn) or phospho-Glu-tRNA(Gln). This is Aspartyl/glutamyl-tRNA(Asn/Gln) amidotransferase subunit B from Mesorhizobium japonicum (strain LMG 29417 / CECT 9101 / MAFF 303099) (Mesorhizobium loti (strain MAFF 303099)).